We begin with the raw amino-acid sequence, 138 residues long: Basic phospholipase A2 beta-bungarotoxin A-AL3 chain (138 aa).

Positions 1-10 (LAVCVSLIGA) are cleaved as a signal peptide. Residues 11 to 18 (ANIPPQHL) constitute a propeptide that is removed on maturation. 6 disulfide bridges follow: Cys-45-Cys-137, Cys-47-Cys-63, Cys-62-Cys-118, Cys-69-Cys-111, Cys-79-Cys-104, and Cys-97-Cys-109. Ca(2+) contacts are provided by Tyr-46, Gly-48, and Gly-50. His-66 is an active-site residue. Asp-67 serves as a coordination point for Ca(2+). Asp-112 is an active-site residue.

This sequence belongs to the phospholipase A2 family. Group I subfamily. D49 sub-subfamily. As to quaternary structure, heterodimer; disulfide-linked. The A chains have phospholipase A2 activity and the B chains show homology with the basic protease inhibitors. It depends on Ca(2+) as a cofactor. Expressed by the venom gland.

It is found in the secreted. It catalyses the reaction a 1,2-diacyl-sn-glycero-3-phosphocholine + H2O = a 1-acyl-sn-glycero-3-phosphocholine + a fatty acid + H(+). Its function is as follows. Snake venom phospholipase A2 (PLA2) that inhibits neuromuscular transmission by blocking acetylcholine release from the nerve termini. PLA2 catalyzes the calcium-dependent hydrolysis of the 2-acyl groups in 3-sn-phosphoglycerides. The polypeptide is Basic phospholipase A2 beta-bungarotoxin A-AL3 chain (Bungarus multicinctus (Many-banded krait)).